The following is an 802-amino-acid chain: Ribosome-releasing factor 2, mitochondrial (802 aa).

Residues 13 to 297 (KKIRNIGIIA…AVVDFLPSPA (285 aa)) form the tr-type G domain. Residues 22–29 (AHIDAGKT), 86–90 (DTPGH), and 140–143 (NKMD) each bind GTP.

This sequence belongs to the TRAFAC class translation factor GTPase superfamily. Classic translation factor GTPase family. EF-G/EF-2 subfamily.

The protein localises to the mitochondrion. Functionally, mitochondrial GTPase that mediates the disassembly of ribosomes from messenger RNA at the termination of mitochondrial protein biosynthesis. Not involved in the GTP-dependent ribosomal translocation step during translation elongation. The protein is Ribosome-releasing factor 2, mitochondrial of Yarrowia lipolytica (strain CLIB 122 / E 150) (Yeast).